Here is a 284-residue protein sequence, read N- to C-terminus: uncharacterized protein (284 aa).

The first 23 residues, 1 to 23 (MKRGCAIAVMICGLITSVSAASA), serve as a signal peptide directing secretion.

It belongs to the surface antigen msp4 family.

This is an uncharacterized protein from Brucella suis biovar 1 (strain 1330).